We begin with the raw amino-acid sequence, 318 residues long: Actin-related protein 2/3 complex subunit 2A (318 aa).

Positions 297 to 318 (RSMNNKSFKRLGLNEVNHTNSK) are disordered.

This sequence belongs to the ARPC2 family. In terms of assembly, component of the Arp2/3 complex composed of ARP2, ARP3, ARPC1/p41-ARC, ARPC2/p34-ARC, ARPC3/p21-ARC, ARPC4/p20-ARC and ARPC5/p16-ARC. Interacts with ARPC4. As to expression, expressed at low levels in all tissues with a relatively highest expression in inflorescences.

The protein resides in the cytoplasm. It localises to the cytoskeleton. It is found in the cell projection. Functionally, functions as actin-binding component of the Arp2/3 complex which is involved in regulation of actin polymerization and together with an activating nucleation-promoting factor (NPF) mediates the formation of branched actin networks. Seems to contact the mother actin filament. Arp2/3 complex plays a critical role in the control of cell morphogenesis via the modulation of cell polarity development. The protein is Actin-related protein 2/3 complex subunit 2A (ARPC2A) of Arabidopsis thaliana (Mouse-ear cress).